The following is a 322-amino-acid chain: Putative UDP-N-acetylglucosamine--dolichyl-phosphate N-acetylglucosaminephosphotransferase (322 aa).

9 helical membrane passes run 5 to 25 (AILLPILISFFISYITTVWVI), 46 to 66 (IPLLGGIGIIAGFIAGSFSLL), 76 to 96 (IPAVILSSLLIAFLGLLDDIF), 102 to 122 (VRAFLPIFASVPLIVYSVGHS), 123 to 143 (IISIPFLGPINFGIFYYIIII), 160 to 180 (LNGLGVGMGIIMLSALAYIGL), 186 to 206 (TYQAGLIALSAIFSLSAFLIF), 222 to 242 (FIGALIGAIGIAGFMYTALAI), and 295 to 315 (YQVVIILWGMEAIFAVIAVIL).

This sequence belongs to the glycosyltransferase 4 family.

It localises to the cell membrane. The enzyme catalyses a di-trans,poly-cis-dolichyl phosphate + UDP-N-acetyl-alpha-D-glucosamine = an N-acetyl-alpha-D-glucosaminyl-diphospho-di-trans,poly-cis-dolichol + UMP. Inhibited by tunicamycin. The chain is Putative UDP-N-acetylglucosamine--dolichyl-phosphate N-acetylglucosaminephosphotransferase (gnpTA) from Saccharolobus solfataricus (strain ATCC 35092 / DSM 1617 / JCM 11322 / P2) (Sulfolobus solfataricus).